Consider the following 46-residue polypeptide: Defensin Tk-AMP-D5 (46 aa).

Intrachain disulfides connect Cys3–Cys46, Cys14–Cys34, Cys20–Cys40, and Cys24–Cys42.

Functionally, plant defense peptide. The polypeptide is Defensin Tk-AMP-D5 (Triticum kiharae (Wheat)).